Here is an 88-residue protein sequence, read N- to C-terminus: Small ribosomal subunit protein bS20 (88 aa).

The disordered stretch occupies residues 1-27 (MANSKSAKKRALQSEKRRQHNASRRSM).

Belongs to the bacterial ribosomal protein bS20 family.

Functionally, binds directly to 16S ribosomal RNA. The protein is Small ribosomal subunit protein bS20 of Shewanella baltica (strain OS223).